Here is a 382-residue protein sequence, read N- to C-terminus: MNSTSFSQVENHSIFCNFSENSQFLAFESDDCHLPLAMIFTLALAYGAVIILGVTGNLALIMIILKQKEMRNVTNILIVNLSFSDLLVAIMCLPFTFVYTLMDHWVFGEAMCKLNPFVQCVSITVSIFSLVLIAVERHQLIINPRGWRPNNRHAYVGIAVIWVLAVVSSLPFLIYQVLTDEPFQNVTLDAFKDKYVCFDKFPSDSHRLSYTTLLLMLQYFGPLCFIFICYFKIYIRLKRRNNMMDKMRDNKYRSSETKRINIMLLSIVVAFAVCWLPLTIFNTVFDWNHQIIATCNHNLLFLLCHLTAMISTCVNPIFYGFLNKNFQRDLQFFFNFCDFRSRDDDYETIAMSTMHTDVSKTSLKQASPVAFKKINNDDNEKI.

The Extracellular segment spans residues 1 to 33; sequence MNSTSFSQVENHSIFCNFSENSQFLAFESDDCH. 3 N-linked (GlcNAc...) asparagine glycosylation sites follow: Asn2, Asn11, and Asn17. The chain crosses the membrane as a helical span at residues 34–54; the sequence is LPLAMIFTLALAYGAVIILGV. Topologically, residues 55–75 are cytoplasmic; it reads TGNLALIMIILKQKEMRNVTN. The helical transmembrane segment at 76-96 threads the bilayer; the sequence is ILIVNLSFSDLLVAIMCLPFT. Topologically, residues 97 to 115 are extracellular; the sequence is FVYTLMDHWVFGEAMCKLN. Cysteines 112 and 197 form a disulfide. The chain crosses the membrane as a helical span at residues 116–136; sequence PFVQCVSITVSIFSLVLIAVE. Over 137 to 153 the chain is Cytoplasmic; it reads RHQLIINPRGWRPNNRH. A helical membrane pass occupies residues 154-174; sequence AYVGIAVIWVLAVVSSLPFLI. The Extracellular portion of the chain corresponds to 175–210; that stretch reads YQVLTDEPFQNVTLDAFKDKYVCFDKFPSDSHRLSY. Asn185 carries N-linked (GlcNAc...) asparagine glycosylation. Residues 211–231 traverse the membrane as a helical segment; the sequence is TTLLLMLQYFGPLCFIFICYF. The Cytoplasmic segment spans residues 232–259; the sequence is KIYIRLKRRNNMMDKMRDNKYRSSETKR. The chain crosses the membrane as a helical span at residues 260-280; the sequence is INIMLLSIVVAFAVCWLPLTI. Over 281–298 the chain is Extracellular; sequence FNTVFDWNHQIIATCNHN. The chain crosses the membrane as a helical span at residues 299–319; the sequence is LLFLLCHLTAMISTCVNPIFY. Topologically, residues 320-382 are cytoplasmic; it reads GFLNKNFQRD…KINNDDNEKI (63 aa). The S-palmitoyl cysteine moiety is linked to residue Cys337. Ser367 carries the phosphoserine modification.

Belongs to the G-protein coupled receptor 1 family.

Its subcellular location is the cell membrane. Its function is as follows. Receptor for neuropeptide Y and peptide YY. The sequence is that of Neuropeptide Y receptor type 1 (NPY1R) from Canis lupus familiaris (Dog).